We begin with the raw amino-acid sequence, 227 residues long: ATP synthase subunit delta (227 aa).

The protein belongs to the ATPase delta chain family. F-type ATPases have 2 components, F(1) - the catalytic core - and F(0) - the membrane proton channel. F(1) has five subunits: alpha(3), beta(3), gamma(1), delta(1), epsilon(1). F(0) has three main subunits: a(1), b(2) and c(10-14). The alpha and beta chains form an alternating ring which encloses part of the gamma chain. F(1) is attached to F(0) by a central stalk formed by the gamma and epsilon chains, while a peripheral stalk is formed by the delta and b chains.

It is found in the cell inner membrane. Functionally, f(1)F(0) ATP synthase produces ATP from ADP in the presence of a proton or sodium gradient. F-type ATPases consist of two structural domains, F(1) containing the extramembraneous catalytic core and F(0) containing the membrane proton channel, linked together by a central stalk and a peripheral stalk. During catalysis, ATP synthesis in the catalytic domain of F(1) is coupled via a rotary mechanism of the central stalk subunits to proton translocation. Its function is as follows. This protein is part of the stalk that links CF(0) to CF(1). It either transmits conformational changes from CF(0) to CF(1) or is implicated in proton conduction. The chain is ATP synthase subunit delta from Rhodopirellula baltica (strain DSM 10527 / NCIMB 13988 / SH1).